We begin with the raw amino-acid sequence, 29 residues long: Cytochrome b6-f complex subunit 8 (29 aa).

A helical transmembrane segment spans residues 3–23 (ILTLGWVGLLGLFTYSIAMVV).

This sequence belongs to the PetN family. As to quaternary structure, the 4 large subunits of the cytochrome b6-f complex are cytochrome b6, subunit IV (17 kDa polypeptide, PetD), cytochrome f and the Rieske protein, while the 4 small subunits are PetG, PetL, PetM and PetN. The complex functions as a dimer.

The protein resides in the cellular thylakoid membrane. Component of the cytochrome b6-f complex, which mediates electron transfer between photosystem II (PSII) and photosystem I (PSI), cyclic electron flow around PSI, and state transitions. This is Cytochrome b6-f complex subunit 8 from Cyanothece sp. (strain PCC 7425 / ATCC 29141).